A 395-amino-acid polypeptide reads, in one-letter code: FAD-dependent monooxygenase cctM (395 aa).

The N-terminal stretch at 1–23 (MEPGTDVRRVLVIGAGAAGLLIA) is a signal peptide. FAD contacts are provided by glutamate 37, glycine 52, and arginine 112. Asparagine 138 and asparagine 298 each carry an N-linked (GlcNAc...) asparagine glycan. FAD is bound at residue aspartate 306.

It belongs to the paxM FAD-dependent monooxygenase family. Requires FAD as cofactor.

It functions in the pathway mycotoxin biosynthesis. Its function is as follows. FAD-dependent monooxygenase; part of the gene cluster that mediates the biosynthesis of the mycotoxin cyclochlorotine, a hepatotoxic and carcinogenic cyclic chlorinated pentapeptide. The function of cctM within the pathway, if any, remains undetermined. The NRPS cctN initially catalyzes the condensation of L-serine (Ser), Pro, L-2-aminobutyrate (2Abu), Ser, and beta-Phe in this order to produce isocyclotine. After the dichlorination of Pro2 catalyzed by cctP2 to produce isocyclochlorotine, the cctO-mediated transacylation of isocyclochlorotine can furnish cyclochlorotine. The subsequent hydroxylation of cyclochlorotine by cctR yields hydroxycyclochlorotine as the final product. CctP1 probably acts as a phenylalanine aminomutase and provides the uncommon building block beta-Phe. Furthermore, 2Abu can be synthesized from threonine by one of the threonine dehydratases and transaminases localized outside of the cluster. The functions of the remaining proteins encoded by the cluster, cctM and cctT, have not been identified yet. The chain is FAD-dependent monooxygenase cctM from Talaromyces islandicus (Penicillium islandicum).